The sequence spans 179 residues: Inner membrane-spanning protein YciB (179 aa).

6 consecutive transmembrane segments (helical) span residues 3-23 (FLFD…ADIY), 24-44 (TATA…WFRH), 49-69 (PMQW…LVLH), 76-96 (WKPT…VIGW), 121-141 (AAWA…AYQF), and 149-169 (FKLF…SVWL).

The protein belongs to the YciB family.

It is found in the cell inner membrane. Its function is as follows. Plays a role in cell envelope biogenesis, maintenance of cell envelope integrity and membrane homeostasis. This is Inner membrane-spanning protein YciB from Cupriavidus necator (strain ATCC 17699 / DSM 428 / KCTC 22496 / NCIMB 10442 / H16 / Stanier 337) (Ralstonia eutropha).